Consider the following 634-residue polypeptide: Kelch-like protein 31 (634 aa).

A2 carries the post-translational modification N,N,N-trimethylalanine. Residues 73-137 (CDLVIGTKTK…AYTGKLTLSL (65 aa)) form the BTB domain. Residues 172–273 (CMYVVNIAET…SAQDLVNYVQ (102 aa)) form the BACK domain. 6 Kelch repeats span residues 317–365 (VLVT…VMDG), 366–419 (FLYV…VFNG), 420–466 (LVYA…VADG), 468–513 (VLVT…TLSD), 515–565 (VYVM…ALHG), and 567–614 (AYLV…TLSM).

N-terminus is methylated by METTL11A/NTM1. Strongly expressed in skeletal muscle and weakly in heart. According to PubMed:15302408, not expressed in other tissues. According to PubMed:18719355, abundantly expressed in both embryonic skeletal and heart tissues.

Transcriptional repressor in MAPK/JNK signaling pathway to regulate cellular functions. Overexpression inhibits the transcriptional activities of both the TPA-response element (TRE) and serum response element (SRE). This chain is Kelch-like protein 31 (KLHL31), found in Homo sapiens (Human).